A 543-amino-acid polypeptide reads, in one-letter code: Alanine aminotransferase 1, mitochondrial (543 aa).

Residues 1 to 55 constitute a mitochondrion transit peptide; sequence MRRFVIGQAKNLIDQSRRRQLHHHKNLSFVSLIPPFSAPSDSSSRHLSSSSSSDM. Positions 43-63 are enriched in low complexity; the sequence is SSRHLSSSSSSDMSASDSSSS. The disordered stretch occupies residues 43 to 64; the sequence is SSRHLSSSSSSDMSASDSSSSL. N-acetylserine is present on Ser-56. Pyridoxal 5'-phosphate-binding positions include Tyr-173, 209-210, Tyr-235, Asn-291, Tyr-322, and 354-356; these read AS and SFQ. Lys-360 carries the N6-(pyridoxal phosphate)lysine modification. Pyridoxal 5'-phosphate contacts are provided by Arg-369 and Asn-397.

It belongs to the class-I pyridoxal-phosphate-dependent aminotransferase family. Alanine aminotransferase subfamily. As to quaternary structure, homodimer. Requires pyridoxal 5'-phosphate as cofactor. Post-translationally, the N-terminus is blocked. In terms of tissue distribution, mostly expressed in roots and shoots, mostly in vascular tissues, and, to a lower extent, in flowers and leaves.

The protein localises to the mitochondrion. It carries out the reaction L-alanine + 2-oxoglutarate = pyruvate + L-glutamate. It participates in photosynthesis; C4 acid pathway. It functions in the pathway amino-acid degradation; L-alanine degradation via transaminase pathway; pyruvate from L-alanine: step 1/1. Functionally, is the major alanine aminotransferase in roots that catalyzes the conversion of alanine to pyruvate. Involved in the rapid conversion of alanine to pyruvate during recovery from low-oxygen stress. This is Alanine aminotransferase 1, mitochondrial from Arabidopsis thaliana (Mouse-ear cress).